We begin with the raw amino-acid sequence, 657 residues long: WD repeat-containing protein 70 (657 aa).

Disordered stretches follow at residues 1-21 (MEHSGTSEVTGADTAGPDPQL) and 43-172 (FEQT…PVQR). Residues 45 to 78 (QTRRTAVERSRKTLEAREKEEEMNREKELRKQIE) show a composition bias toward basic and acidic residues. Low complexity predominate over residues 82-105 (PAPSSSSAARERSQSSCRDTSSSD). 2 stretches are compositionally biased toward acidic residues: residues 106–119 (SESDDSSDSSDDEL) and 150–168 (EEGEDDDDDELDDEGEEDN). 7 WD repeats span residues 183–222 (HGTKTVSALGLDPSGARLVTGGYDYDVKFWDFAGMDASFK), 230–271 (CECH…ECIK), 284–324 (GHTA…KQKS), 333–372 (GKKVIPTTCTYSRDGNLVAAACQNGSIQIWDRNLTVHPKF), 379–418 (DPGTDTSCVAFSYDGNVLASRGGDDTLKLWDVRQFNKPLF), 424–469 (PTLF…RVYE), and 472–511 (ITDASVVRCLWHPKLNQIMVGTGNGLAKVYYDPNKSQRGA). A Glycyl lysine isopeptide (Lys-Gly) (interchain with G-Cter in SUMO2) cross-link involves residue Lys-299. Position 455 is an N6-acetyllysine (Lys-455). The span at 543–568 (REPRQRSTRKQLEKDRLDPLKSHKPE) shows a compositional bias: basic and acidic residues. The segment at 543 to 584 (REPRQRSTRKQLEKDRLDPLKSHKPEPPVAGPGRGGRVGTHG) is disordered. Over residues 574-584 (PGRGGRVGTHG) the composition is skewed to gly residues. A Phosphothreonine modification is found at Thr-582. Glycyl lysine isopeptide (Lys-Gly) (interchain with G-Cter in SUMO2) cross-links involve residues Lys-593 and Lys-599. Ser-624 and Ser-641 each carry phosphoserine. Positions 634–657 (TMFAQVESDDEESKNEPEWKKRKI) are disordered. Positions 647 to 657 (KNEPEWKKRKI) are enriched in basic and acidic residues.

Belongs to the WD repeat GAD-1 family.

The protein is WD repeat-containing protein 70 (Wdr70) of Mus musculus (Mouse).